A 156-amino-acid polypeptide reads, in one-letter code: Small ribosomal subunit protein uS7 (156 aa).

Belongs to the universal ribosomal protein uS7 family. As to quaternary structure, part of the 30S ribosomal subunit. Contacts proteins S9 and S11.

Its function is as follows. One of the primary rRNA binding proteins, it binds directly to 16S rRNA where it nucleates assembly of the head domain of the 30S subunit. Is located at the subunit interface close to the decoding center, probably blocks exit of the E-site tRNA. The polypeptide is Small ribosomal subunit protein uS7 (Acetivibrio thermocellus (strain ATCC 27405 / DSM 1237 / JCM 9322 / NBRC 103400 / NCIMB 10682 / NRRL B-4536 / VPI 7372) (Clostridium thermocellum)).